The following is a 228-amino-acid chain: L-ribulose-5-phosphate 4-epimerase UlaF (228 aa).

Residues 26 to 27, 43 to 44, and 72 to 73 each bind substrate; these read GN, SG, and SS. Asp74, His93, and His95 together coordinate Zn(2+). Catalysis depends on Asp118, which acts as the Proton donor/acceptor. His167 provides a ligand contact to Zn(2+). Tyr225 serves as the catalytic Proton donor/acceptor.

It belongs to the aldolase class II family. AraD/FucA subfamily. The cofactor is Zn(2+).

It carries out the reaction L-ribulose 5-phosphate = D-xylulose 5-phosphate. It participates in cofactor degradation; L-ascorbate degradation; D-xylulose 5-phosphate from L-ascorbate: step 4/4. In terms of biological role, catalyzes the isomerization of L-ribulose 5-phosphate to D-xylulose 5-phosphate. Is involved in the anaerobic L-ascorbate utilization. This is L-ribulose-5-phosphate 4-epimerase UlaF from Escherichia coli O6:K15:H31 (strain 536 / UPEC).